The chain runs to 906 residues: Translation initiation factor IF-2 (906 aa).

2 disordered regions span residues 134–250 (RQRN…GSHV) and 269–317 (HLSA…FERP). Over residues 136–177 (RNLDEQQRLAESDRVRDEEIQRKRDEEQAAKDRAEAERKAAE) the composition is skewed to basic and acidic residues. 2 stretches are compositionally biased toward low complexity: residues 178-232 (EAAA…STPA) and 287-305 (GRPG…RGSN). The tr-type G domain occupies 405 to 574 (TRPPVVTIMG…SLQAEVLELK (170 aa)). The G1 stretch occupies residues 414–421 (GHVDHGKT). 414-421 (GHVDHGKT) contributes to the GTP binding site. A G2 region spans residues 439–443 (GITQH). The segment at 460–463 (DTPG) is G3. GTP is bound by residues 460-464 (DTPGH) and 514-517 (NKID). A G4 region spans residues 514–517 (NKID). Residues 550-552 (SAK) form a G5 region.

The protein belongs to the TRAFAC class translation factor GTPase superfamily. Classic translation factor GTPase family. IF-2 subfamily.

The protein localises to the cytoplasm. One of the essential components for the initiation of protein synthesis. Protects formylmethionyl-tRNA from spontaneous hydrolysis and promotes its binding to the 30S ribosomal subunits. Also involved in the hydrolysis of GTP during the formation of the 70S ribosomal complex. In Xanthomonas oryzae pv. oryzae (strain MAFF 311018), this protein is Translation initiation factor IF-2.